Consider the following 587-residue polypeptide: Protein NRT1/ PTR FAMILY 2.9 (587 aa).

12 consecutive transmembrane segments (helical) span residues 35 to 55, 65 to 85, 94 to 114, 135 to 155, 181 to 201, 209 to 229, 325 to 345, 368 to 388, 412 to 432, 457 to 477, 493 to 513, and 540 to 560; these read FEKLGIVGSSSNLVIYLTTVF, VVNIYGGTSNFGTIVAAFLCD, LSFAMIACFLGSVAMDLTAVI, IGQIMFLAGAMVLLVIGAGGI, FFNWYFFTFTFAQMVSLTLIV, WSIGLAIPAILMLLGCIIFFA, CVIRVLPVWLSAALFYLAYIQ, IPAGSYTVFLMLGMTIFIPIY, VGAGLFLCITSMMVSAIVEQY, GMWLIPQLVLMGIADALAGVG, FAGSLYYCGIGLASYLSTFLL, and YFYFLVAGMMTLNLAYFLLVS.

It belongs to the major facilitator superfamily. Proton-dependent oligopeptide transporter (POT/PTR) (TC 2.A.17) family. In terms of tissue distribution, expressed in roots, stems and major veins of the leaves. Detected in the companion cells of the root phloem.

It localises to the cell membrane. Functionally, low-affinity nitrate transporter facilitating nitrate loading into root phloem. Not involved in dipeptides transport, but has a weak glucosinolate transport activity. The chain is Protein NRT1/ PTR FAMILY 2.9 (NPF2.9) from Arabidopsis thaliana (Mouse-ear cress).